The following is an 81-amino-acid chain: Conotoxin ArMKLT2-01 (81 aa).

The first 19 residues, 1–19 (MKLTCVIIVVALFLTACHA), serve as a signal peptide directing secretion. A propeptide spanning residues 20 to 43 (KDKQEHPAVRGSDDMQDSEDLKLA) is cleaved from the precursor. 3 cysteine pairs are disulfide-bonded: C46/C61, C53/C65, and C60/C74.

It belongs to the conotoxin O1 superfamily. In terms of tissue distribution, expressed by the venom duct.

It localises to the secreted. The sequence is that of Conotoxin ArMKLT2-01 from Conus arenatus (Sand-dusted cone).